The primary structure comprises 251 residues: MRRPMVAGNWKMHGTRASVVELTQGLGNMSLPSGVEVAVFPPSLFVTQVIDGLEGKGINVGAQNSAVQPEQGALTGEVAPSQLAEVGCKYVLVGHSERRQIIGESDEVLNQKFAAAQKSGLTPVLCIGETLAEREAGETLKVVGRQLSSVIDAFGIKAFANAVIAYEPVWAIGTGLTASPQQAQDVHAAIRKQLAAMDAEVAANVQLLYGGSVKAANAAELFGMPDIDGGLIGGASLNADEFGAICRAAGN.

9-11 lines the substrate pocket; sequence NWK. Catalysis depends on His-95, which acts as the Electrophile. Residue Glu-167 is the Proton acceptor of the active site. Substrate contacts are provided by residues Gly-173, Ser-212, and 233–234; that span reads GG.

The protein belongs to the triosephosphate isomerase family. In terms of assembly, homodimer.

It is found in the cytoplasm. The enzyme catalyses D-glyceraldehyde 3-phosphate = dihydroxyacetone phosphate. It functions in the pathway carbohydrate biosynthesis; gluconeogenesis. Its pathway is carbohydrate degradation; glycolysis; D-glyceraldehyde 3-phosphate from glycerone phosphate: step 1/1. Its function is as follows. Involved in the gluconeogenesis. Catalyzes stereospecifically the conversion of dihydroxyacetone phosphate (DHAP) to D-glyceraldehyde-3-phosphate (G3P). The protein is Triosephosphate isomerase of Pseudomonas entomophila (strain L48).